The primary structure comprises 147 residues: Large ribosomal subunit protein uL11 (147 aa).

The protein belongs to the universal ribosomal protein uL11 family. Part of the ribosomal stalk of the 50S ribosomal subunit. Interacts with L10 and the large rRNA to form the base of the stalk. L10 forms an elongated spine to which L12 dimers bind in a sequential fashion forming a multimeric L10(L12)X complex. In terms of processing, one or more lysine residues are methylated.

Functionally, forms part of the ribosomal stalk which helps the ribosome interact with GTP-bound translation factors. The polypeptide is Large ribosomal subunit protein uL11 (Sorangium cellulosum (strain So ce56) (Polyangium cellulosum (strain So ce56))).